The following is a 242-amino-acid chain: Transcription factor TCP17 (242 aa).

The region spanning 33 to 91 (GKDRHSKVCTVRGLRDRRIRLSVMTAIQVYDLQERLGLSQPSKVIDWLLEVAKNDVDLL) is the TCP domain.

As to quaternary structure, interacts with SPL. Expressed in cotyledons, particularly in the vascular region, in leaves, roots, stems, buds, flowers and siliques.

It localises to the nucleus. Its function is as follows. Plays a pivotal role in the control of morphogenesis of shoot organs by negatively regulating the expression of boundary-specific genes such as CUC genes, probably through the induction of miRNA (e.g. miR164). Participates in ovule development. The protein is Transcription factor TCP17 (TCP17) of Arabidopsis thaliana (Mouse-ear cress).